A 356-amino-acid polypeptide reads, in one-letter code: sn-glycerol-3-phosphate import ATP-binding protein UgpC (356 aa).

Residues 4–235 (LKLQAVTKSW…PASRFVASFI (232 aa)) form the ABC transporter domain. Position 37 to 44 (37 to 44 (GPSGCGKS)) interacts with ATP.

It belongs to the ABC transporter superfamily. sn-glycerol-3-phosphate importer (TC 3.A.1.1.3) family. In terms of assembly, the complex is composed of two ATP-binding proteins (UgpC), two transmembrane proteins (UgpA and UgpE) and a solute-binding protein (UgpB).

Its subcellular location is the cell inner membrane. It carries out the reaction sn-glycerol 3-phosphate(out) + ATP + H2O = sn-glycerol 3-phosphate(in) + ADP + phosphate + H(+). Part of the ABC transporter complex UgpBAEC involved in sn-glycerol-3-phosphate (G3P) import. Responsible for energy coupling to the transport system. The chain is sn-glycerol-3-phosphate import ATP-binding protein UgpC from Salmonella choleraesuis (strain SC-B67).